Here is a 160-residue protein sequence, read N- to C-terminus: Transcription elongation factor GreA (160 aa).

A coiled-coil region spans residues 1–72 (MAEKTYPMTL…QISSLETKIR (72 aa)).

It belongs to the GreA/GreB family.

Its function is as follows. Necessary for efficient RNA polymerase transcription elongation past template-encoded arresting sites. The arresting sites in DNA have the property of trapping a certain fraction of elongating RNA polymerases that pass through, resulting in locked ternary complexes. Cleavage of the nascent transcript by cleavage factors such as GreA or GreB allows the resumption of elongation from the new 3'terminus. GreA releases sequences of 2 to 3 nucleotides. The sequence is that of Transcription elongation factor GreA from Streptococcus gordonii (strain Challis / ATCC 35105 / BCRC 15272 / CH1 / DL1 / V288).